We begin with the raw amino-acid sequence, 117 residues long: UPF0145 protein CV_4322 (117 aa).

This sequence belongs to the UPF0145 family.

The protein is UPF0145 protein CV_4322 of Chromobacterium violaceum (strain ATCC 12472 / DSM 30191 / JCM 1249 / CCUG 213 / NBRC 12614 / NCIMB 9131 / NCTC 9757 / MK).